The primary structure comprises 848 residues: Translation initiation factor IF-2 (848 aa).

Positions 106 to 150 (TEQQTEAENSTNINLSEQTIKNNSHQSSSNTIETTQEKKQNDDLS) are disordered. Residues 112–139 (AENSTNINLSEQTIKNNSHQSSSNTIET) are compositionally biased toward polar residues. Residues 347 to 517 (PRAPIITVMG…LLLADMLELK (171 aa)) enclose the tr-type G domain. Positions 356–363 (GHVDHGKT) are G1. Residue 356 to 363 (GHVDHGKT) coordinates GTP. The segment at 381–385 (GITQH) is G2. Residues 403–406 (DTPG) form a G3 region. Residues 403-407 (DTPGH) and 457-460 (NKID) each bind GTP. Residues 457 to 460 (NKID) are G4. Residues 493–495 (SAL) are G5.

Belongs to the TRAFAC class translation factor GTPase superfamily. Classic translation factor GTPase family. IF-2 subfamily.

The protein resides in the cytoplasm. In terms of biological role, one of the essential components for the initiation of protein synthesis. Protects formylmethionyl-tRNA from spontaneous hydrolysis and promotes its binding to the 30S ribosomal subunits. Also involved in the hydrolysis of GTP during the formation of the 70S ribosomal complex. The chain is Translation initiation factor IF-2 from Orientia tsutsugamushi (strain Boryong) (Rickettsia tsutsugamushi).